The following is a 260-amino-acid chain: Cytochrome c oxidase subunit 3 (260 aa).

6 helical membrane-spanning segments follow: residues 30 to 50 (LILW…VLLV), 81 to 101 (GMIL…WAFF), 126 to 146 (FLVP…VTWA), 158 to 178 (AIQS…LQAW), 196 to 216 (FFVA…FLAV), and 239 to 259 (WYWH…YWWG).

The protein belongs to the cytochrome c oxidase subunit 3 family. In terms of assembly, component of the cytochrome c oxidase (complex IV, CIV), a multisubunit enzyme composed of a catalytic core of 3 subunits and several supernumerary subunits. The complex exists as a monomer or a dimer and forms supercomplexes (SCs) in the inner mitochondrial membrane with ubiquinol-cytochrome c oxidoreductase (cytochrome b-c1 complex, complex III, CIII).

The protein localises to the mitochondrion inner membrane. The enzyme catalyses 4 Fe(II)-[cytochrome c] + O2 + 8 H(+)(in) = 4 Fe(III)-[cytochrome c] + 2 H2O + 4 H(+)(out). Functionally, component of the cytochrome c oxidase, the last enzyme in the mitochondrial electron transport chain which drives oxidative phosphorylation. The respiratory chain contains 3 multisubunit complexes succinate dehydrogenase (complex II, CII), ubiquinol-cytochrome c oxidoreductase (cytochrome b-c1 complex, complex III, CIII) and cytochrome c oxidase (complex IV, CIV), that cooperate to transfer electrons derived from NADH and succinate to molecular oxygen, creating an electrochemical gradient over the inner membrane that drives transmembrane transport and the ATP synthase. Cytochrome c oxidase is the component of the respiratory chain that catalyzes the reduction of oxygen to water. Electrons originating from reduced cytochrome c in the intermembrane space (IMS) are transferred via the dinuclear copper A center (CU(A)) of subunit 2 and heme A of subunit 1 to the active site in subunit 1, a binuclear center (BNC) formed by heme A3 and copper B (CU(B)). The BNC reduces molecular oxygen to 2 water molecules using 4 electrons from cytochrome c in the IMS and 4 protons from the mitochondrial matrix. This Pisaster ochraceus (Ochre sea star) protein is Cytochrome c oxidase subunit 3 (COIII).